The primary structure comprises 586 residues: MSSSSLVTSLLFSSSSSSNTATSTSSRRSFSLFSKNQYCKPSPLRRSSSLLLVRCSLQQQQEEKAAPAAESHHAGGGQDDAATASHHAVEGENGVADADGGGVKKSKEELEEEEQQEVDWRSDEEFKRFMGNPSIEGAIKLEKKRADRKLRELDREPDANPLAGLLRGLARGQLAREKERLELAENTFKALDLNKLKSCFGYDTFFAVDVRRFGDGGIFIGNLRKPVEEVRPKLEKKIAEAAGTDVTLWFMEEKNDDITKQVCMVQPKAEIDLQLEITKLSTPWGYLSAVALAVTTFGTIAIMSGFFLKPGATFDDYVSDVLPLFAGFLSILGVSEIATRLTAARYGVKLSPSFLVPSNWTGCLGVMNNYESLLPNKKALFDIPVARAASAYLTSVALAVSAFVSDGSLNGGKNALFVRPEFFYNNPLLSFVQAVIGPYADELGNVLPNAVEGVGVPVDPLAFAGLLGIVVTSLNLLPCGRLEGGRIAQALFGRGAAAVLSFATSVALGAGAIIGGSVLCLAWGLFATFVRGGEEIPAQDEITPLGSERYAWGLVLAVVCLLTLFPNGGGTYSSDFLGAPFFRGGI.

Residues 1 to 54 (MSSSSLVTSLLFSSSSSSNTATSTSSRRSFSLFSKNQYCKPSPLRRSSSLLLVR) constitute a chloroplast transit peptide. A compositionally biased stretch (basic and acidic residues) spans 62-73 (EEKAAPAAESHH). The interval 62–118 (EEKAAPAAESHHAGGGQDDAATASHHAVEGENGVADADGGGVKKSKEELEEEEQQEV) is disordered. The stretch at 103–195 (VKKSKEELEE…NTFKALDLNK (93 aa)) forms a coiled coil. The next 7 membrane-spanning stretches (helical) occupy residues 287 to 307 (LSAV…SGFF), 318 to 338 (VSDV…SEIA), 389 to 409 (ASAY…DGSL), 427 to 447 (PLLS…GNVL), 454 to 474 (VGVP…VTSL), 506 to 526 (VALG…WGLF), and 550 to 570 (YAWG…NGGG).

The protein belongs to the peptidase M50B family.

Its subcellular location is the plastid. It localises to the chloroplast membrane. Its function is as follows. Probable membrane-associated metalloprotease that may be involved in chloroplast development. In Oryza sativa subsp. indica (Rice), this protein is Probable zinc metalloprotease EGY3, chloroplastic (EGY3).